Reading from the N-terminus, the 110-residue chain is Flagellar hook-basal body complex protein FliE (110 aa).

Belongs to the FliE family.

It localises to the bacterial flagellum basal body. This Pseudomonas putida (strain W619) protein is Flagellar hook-basal body complex protein FliE.